The following is a 596-amino-acid chain: Ulvan-active sulfatase (596 aa).

Residues 1-27 (MLFLRFKFFNNRLLFVSVLCFVICVSC) form the signal peptide. Ca(2+) contacts are provided by Glu-58, Asp-59, Cys-97, Asp-306, and His-307. Cys-97 (nucleophile) is an active-site residue. Cys-97 carries the post-translational modification 3-oxoalanine (Cys).

It belongs to the sulfatase family. The cofactor is Ca(2+). Post-translationally, the conversion to 3-oxoalanine (also known as C-formylglycine, FGly), of a serine or cysteine residue in prokaryotes and of a cysteine residue in eukaryotes, is critical for catalytic activity.

It localises to the periplasm. Sulfatase involved in ulvan degradation. Ulvan is the main polysaccharide component of the Ulvales (green seaweed) cell wall. It is composed of disaccharide building blocks comprising 3-sulfated rhamnose (Rha3S) linked to D-glucuronic acid (GlcA), L-iduronic acid (IduA), or D-xylose (Xyl). The sulfatase desulfates Xyl2S-Rha3S, product of the degradation of ulvan by endo-acting alpha-1,4-L-rhamnosidase, to Xyl-Rha3S. The polypeptide is Ulvan-active sulfatase (Formosa agariphila (strain DSM 15362 / KCTC 12365 / LMG 23005 / KMM 3901 / M-2Alg 35-1)).